Here is a 207-residue protein sequence, read N- to C-terminus: Protein LURP1 (207 aa).

Belongs to the LOR family. In terms of tissue distribution, limited to discrete pathogen infection sites in leaves.

In terms of biological role, involved in basal defense against virulent oomycetes. Might be related to the phospholipid scramblase and tubby-like superfamily of membrane tethered transcription factors. The chain is Protein LURP1 (LURP1) from Arabidopsis thaliana (Mouse-ear cress).